The chain runs to 319 residues: Lipoyl synthase (319 aa).

The segment at 5–31 is disordered; the sequence is LDTISANPVRPRHPEKANRPDALSPPK. Residues Cys-61, Cys-66, Cys-72, Cys-87, Cys-91, Cys-94, and Ser-300 each contribute to the [4Fe-4S] cluster site. Residues 73–289 enclose the Radical SAM core domain; that stretch reads WDKKHATFMI…ETVAYTKGFL (217 aa).

The protein belongs to the radical SAM superfamily. Lipoyl synthase family. It depends on [4Fe-4S] cluster as a cofactor.

The protein resides in the cytoplasm. It carries out the reaction [[Fe-S] cluster scaffold protein carrying a second [4Fe-4S](2+) cluster] + N(6)-octanoyl-L-lysyl-[protein] + 2 oxidized [2Fe-2S]-[ferredoxin] + 2 S-adenosyl-L-methionine + 4 H(+) = [[Fe-S] cluster scaffold protein] + N(6)-[(R)-dihydrolipoyl]-L-lysyl-[protein] + 4 Fe(3+) + 2 hydrogen sulfide + 2 5'-deoxyadenosine + 2 L-methionine + 2 reduced [2Fe-2S]-[ferredoxin]. Its pathway is protein modification; protein lipoylation via endogenous pathway; protein N(6)-(lipoyl)lysine from octanoyl-[acyl-carrier-protein]: step 2/2. Functionally, catalyzes the radical-mediated insertion of two sulfur atoms into the C-6 and C-8 positions of the octanoyl moiety bound to the lipoyl domains of lipoate-dependent enzymes, thereby converting the octanoylated domains into lipoylated derivatives. This chain is Lipoyl synthase, found in Nitrobacter winogradskyi (strain ATCC 25391 / DSM 10237 / CIP 104748 / NCIMB 11846 / Nb-255).